A 201-amino-acid chain; its full sequence is Protein Thf1 (201 aa).

Residues 174–201 (IYKSSISKMEQAKELIQEQRIKDKKKTL) are a coiled coil.

Belongs to the THF1 family.

Functionally, may be involved in photosynthetic membrane biogenesis. The chain is Protein Thf1 from Prochlorococcus marinus (strain MIT 9312).